Reading from the N-terminus, the 728-residue chain is MDSDMDYERPNVETIKCVVVGDNAVGKTRLICARACNATLTQYQLLATHVPTVWAIDQYRVCQEVLERSRDVVDDVSVSLRLWDTFGDHHKDRRFAYGRSDVVVLCFSIANPNSLHHVKTMWYPEIKHFCPRAPVILVGCQLDLRYADLEAVNRARRPLARPIKPNEILPPEKGREVAKELGIPYYETSVVAQFGIKDVFDNAIRAALISRRHLQFWKSHLRNVQRPLLQAPFLPPKPPPPIIVVPDPPSSSEECPAHLLEDPLCADVILVLQERVRIFAHKIYLSTSSSKFYDLFLMDLSEGELGGPSGSGGPRPEDHRSHPEQHHHHHHHHHGRDFLLRAASFDVCESVDEAGGSGPAGLRASTSDGILRGNGTGYLPGRGRVLSSWSRAFVSIQEEMAEDPLTFKSRLMVVVKMDNSIQPGPFRAVLKYLYTGELGENERDLMHIAHIAELLEVFDLRMMVANILNNEAFMNQEITKAFHVRRTNRVKECLAKGTFSDVTFILDDGTISAHKPLLISSCDWMAAMFGGPFVESSTREVVFPYTSKSCMRAVLEYLYTGMFTSSPDLDDMKLIVLANRLCLPHLVALTEQYTVTGLMEATQMMVDIDGDVLVFLELAQFHCAYQLADWCLHHICTNYNNVCRKFPRDMKAMSPENQEYFEKHRWPPVWYLKEEDHYQRARKEREKEDYLHLRRQPKRRWLFWNSPSSPSSSAAGSASPSSSSSAVV.

Residues 1 to 210 (MDSDMDYERP…DNAIRAALIS (210 aa)) form a rho-like region. GTP-binding positions include 21–28 (GDNAVGKT), 84–88 (DTFGD), and 140–143 (CQLD). 2 BTB domains span residues 266–333 (ADVI…HHHH) and 500–567 (SDVT…TSSP). Positions 304–313 (ELGGPSGSGG) are enriched in gly residues. Residues 304-333 (ELGGPSGSGGPRPEDHRSHPEQHHHHHHHH) form a disordered region. Residues 315-324 (RPEDHRSHPE) show a composition bias toward basic and acidic residues. The segment at 703–728 (FWNSPSSPSSSAAGSASPSSSSSAVV) is disordered. The segment covering 706 to 728 (SPSSPSSSAAGSASPSSSSSAVV) has biased composition (low complexity).

This sequence belongs to the small GTPase superfamily. Rho family. As to quaternary structure, interacts with HSP90AA1 and HSP90AB1. Forms a complex with CUL3 and RBX1. Interacts (via BTB 1 domain) with CUL3. Interacts with MSI2. Post-translationally, autoubiquitinated by RHOBTB2-CUL3-RBX1 ubiquitin ligase complex. Expressed in most tissues, with highest expression in brain.

Its function is as follows. Regulator of cell proliferation and apoptosis. It likely functions as a substrate-adapter that recruits key substrates, e.g. MSI2, to CUL3-based ubiquitin ligase complexes for degradation. Required for MSI2 ubiquitination and degradation. The chain is Rho-related BTB domain-containing protein 2 (Rhobtb2) from Mus musculus (Mouse).